Consider the following 581-residue polypeptide: Coiled-coil domain-containing protein 102A (581 aa).

4 disordered regions span residues 1–61 (MNHT…GLGC), 156–219 (QRVR…IGTD), 496–517 (QAED…SLDE), and 534–581 (SRLR…LQIP). Over residues 39–59 (TPSPSGGTPSSSPPLLLSPGL) the composition is skewed to low complexity. Positions 70-164 (REELRLRELE…AQRVRAEQSS (95 aa)) form a coiled coil. Polar residues predominate over residues 161 to 184 (EQSSPENASTAPESISSTASTHSN). Basic and acidic residues predominate over residues 185–202 (QPREAEIKQDNQDEEGVR). Residues 270–541 (AALEEDTSKL…LQSRLRRQQN (272 aa)) adopt a coiled-coil conformation. Over residues 559-581 (EDADGPPSDPDEDEEEELQLQIP) the composition is skewed to acidic residues.

This is Coiled-coil domain-containing protein 102A (ccdc102a) from Danio rerio (Zebrafish).